A 109-amino-acid chain; its full sequence is Defensin-B5 (109 aa).

A signal peptide spans Met1–Ala20. The segment at Gln21 to Val44 is disordered. The propeptide occupies Gln21–Leu70. Over residues Ser34 to Val44 the composition is skewed to basic and acidic residues. Intrachain disulfides connect Cys73–Cys101, Cys80–Cys95, and Cys85–Cys102. Positions Ala107–Pro109 are excised as a propeptide.

The protein belongs to the beta-defensin family. Highly expressed in kidney, and expressed at lower levels in testis.

Its subcellular location is the secreted. Functionally, has antimicrobial activity. The chain is Defensin-B5 from Ornithorhynchus anatinus (Duckbill platypus).